Reading from the N-terminus, the 387-residue chain is Zinc finger protein neuro-d4 (387 aa).

Residues Lys-106, Lys-129, and Lys-133 each participate in a glycyl lysine isopeptide (Lys-Gly) (interchain with G-Cter in SUMO2) cross-link. The segment at 195 to 218 (YVCDICGKRYKNRPGLSYHYTHTH) adopts a C2H2-type zinc-finger fold. 2 PHD-type zinc fingers span residues 271–328 (NGYC…CKSC) and 325–375 (CKSC…CLRH). Positions 274, 277, 293, 296, 301, 304, 322, 325, 328, 331, 343, 346, 351, 354, 369, and 372 each coordinate Zn(2+).

Belongs to the requiem/DPF family. Component of neuron-specific chromatin remodeling complex (nBAF complex) composed of at least, ARID1A/BAF250A or ARID1B/BAF250B, SMARCD1/BAF60A, SMARCD3/BAF60C, SMARCA2/BRM/BAF190B, SMARCA4/BRG1/BAF190A, SMARCB1/BAF47, SMARCC1/BAF155, SMARCE1/BAF57, SMARCC2/BAF170, DPF1/BAF45B, DPF3/BAF45C, ACTL6B/BAF53B and actin.

It localises to the cytoplasm. It is found in the nucleus. Functionally, may have an important role in developing neurons by participating in regulation of cell survival, possibly as a neurospecific transcription factor. Belongs to the neuron-specific chromatin remodeling complex (nBAF complex). During neural development a switch from a stem/progenitor to a postmitotic chromatin remodeling mechanism occurs as neurons exit the cell cycle and become committed to their adult state. The transition from proliferating neural stem/progenitor cells to postmitotic neurons requires a switch in subunit composition of the npBAF and nBAF complexes. As neural progenitors exit mitosis and differentiate into neurons, npBAF complexes which contain ACTL6A/BAF53A and PHF10/BAF45A, are exchanged for homologous alternative ACTL6B/BAF53B and DPF1/BAF45B or DPF3/BAF45C subunits in neuron-specific complexes (nBAF). The npBAF complex is essential for the self-renewal/proliferative capacity of the multipotent neural stem cells. The nBAF complex along with CREST plays a role regulating the activity of genes essential for dendrite growth. This is Zinc finger protein neuro-d4 from Homo sapiens (Human).